The primary structure comprises 167 residues: Crossover junction endodeoxyribonuclease RuvC (167 aa).

Active-site residues include D7, E67, and D139. 3 residues coordinate Mg(2+): D7, E67, and D139.

Belongs to the RuvC family. As to quaternary structure, homodimer which binds Holliday junction (HJ) DNA. The HJ becomes 2-fold symmetrical on binding to RuvC with unstacked arms; it has a different conformation from HJ DNA in complex with RuvA. In the full resolvosome a probable DNA-RuvA(4)-RuvB(12)-RuvC(2) complex forms which resolves the HJ. Requires Mg(2+) as cofactor.

Its subcellular location is the cytoplasm. The enzyme catalyses Endonucleolytic cleavage at a junction such as a reciprocal single-stranded crossover between two homologous DNA duplexes (Holliday junction).. The RuvA-RuvB-RuvC complex processes Holliday junction (HJ) DNA during genetic recombination and DNA repair. Endonuclease that resolves HJ intermediates. Cleaves cruciform DNA by making single-stranded nicks across the HJ at symmetrical positions within the homologous arms, yielding a 5'-phosphate and a 3'-hydroxyl group; requires a central core of homology in the junction. The consensus cleavage sequence is 5'-(A/T)TT(C/G)-3'. Cleavage occurs on the 3'-side of the TT dinucleotide at the point of strand exchange. HJ branch migration catalyzed by RuvA-RuvB allows RuvC to scan DNA until it finds its consensus sequence, where it cleaves and resolves the cruciform DNA. The polypeptide is Crossover junction endodeoxyribonuclease RuvC (Zymomonas mobilis subsp. mobilis (strain ATCC 31821 / ZM4 / CP4)).